The primary structure comprises 911 residues: Protein SOSEKI (911 aa).

Residues 15–107 are DIX-like oligomerization domain; that stretch reads TKVQVVYYLS…LVLKGSELYT (93 aa). Disordered stretches follow at residues 219-470 and 492-810; these read SETL…TQCE and LCGN…PPRI. 2 stretches are compositionally biased toward basic and acidic residues: residues 253 to 286 and 295 to 407; these read TDREHSYGPPRKTESMGRERSLPRDLPRSREVSR and EAPR…EELP. Polar residues predominate over residues 414 to 423; it reads SPTCSESGDS. Residues 452-467 are compositionally biased toward low complexity; it reads SSSTRSSTPSTSAAST. The Association to cell membranes motif lies at 493-494; that stretch reads CG. The span at 511-527 shows a compositional bias: low complexity; it reads PLAAAAQPASGAVPQSP. A compositionally biased stretch (polar residues) spans 591–607; the sequence is SGVNSAMATPFLQTENN. The span at 608–662 shows a compositional bias: low complexity; sequence SPSSSESSSAAVSSGKKPASISLSGTSDASDGGNGASSTASSSSEVQNNVSVKEV. Over residues 663–683 the composition is skewed to polar residues; it reads ITQQLPSPSSSEGRPSLNIDT. The span at 696 to 709 shows a compositional bias: basic and acidic residues; that stretch reads SDVRETVKTTRPDS. Residues 722–733 show a composition bias toward polar residues; sequence PVRTQLSSSPSF. The segment covering 735–771 has biased composition (basic and acidic residues); it reads KRIEDARARARSLVSKEIRSGESRSSKDLLKENDRVK. Over residues 772-784 the composition is skewed to low complexity; it reads TSSGSMRSGSTRT. Residues 785 to 805 show a composition bias toward polar residues; the sequence is PNNKNGTTGAGSKTLSGTFNR. Residues 864–893 form a C2HC/C3H-type zinc finger; the sequence is ILQECGQCGRTFKPDSLKVHMRGCHALRRS. The Zn(2+) site is built by Cys868, Cys871, His883, and Cys887.

It belongs to the SOSEKI family. As to quaternary structure, homodimer. Forms long polymer filaments with other SOKs proteins polymers crucial for polar localization and biological activity. Requires Zn(2+) as cofactor.

The protein resides in the cell membrane. In terms of biological role, SOSEKI proteins locally interpret global polarity cues and can influence cell division orientation to coordinate cell polarization relative to body axes. In Marchantia polymorpha (Common liverwort), this protein is Protein SOSEKI.